The following is a 429-amino-acid chain: Cytochrome bc1 complex Rieske iron-sulfur subunit (429 aa).

Residues 1 to 45 (MSRADDDAVGVPPTCGGRSDEEERRIVPGPNPQDGAKDGAKATAV) are disordered. Helical transmembrane passes span 96-116 (VAVW…IFLF), 137-157 (PLYG…AVLY), and 207-227 (FGVG…GGLI). The Rieske domain occupies 316 to 410 (RNPVMLIRIK…ITIDTDGYLV (95 aa)). Residues Cys-353, His-355, Cys-372, and His-375 each contribute to the [2Fe-2S] cluster site. Cys-358 and Cys-374 form a disulfide bridge.

This sequence belongs to the Rieske iron-sulfur protein family. As to quaternary structure, the cytochrome bc1 complex is composed of a cytochrome b (QcrB), the Rieske iron-sulfur protein (QcrA) and a diheme cytochrome c (QcrC) subunit. The cofactor is [2Fe-2S] cluster.

The protein resides in the cell membrane. In terms of biological role, iron-sulfur subunit of the cytochrome bc1 complex, an essential component of the respiratory electron transport chain required for ATP synthesis. The bc1 complex catalyzes the oxidation of menaquinol and the reduction of cytochrome c in the respiratory chain. The bc1 complex operates through a Q-cycle mechanism that couples electron transfer to generation of the proton gradient that drives ATP synthesis. The chain is Cytochrome bc1 complex Rieske iron-sulfur subunit (qcrA) from Mycobacterium bovis (strain ATCC BAA-935 / AF2122/97).